The sequence spans 369 residues: Type 2 DNA topoisomerase 6 subunit A (369 aa).

The Topo IIA-type catalytic domain occupies K11–A149. The O-(5'-phospho-DNA)-tyrosine intermediate role is filled by Y106. E202 and D254 together coordinate Mg(2+).

The protein belongs to the TOP6A family. As to quaternary structure, homodimer. Heterotetramer of two Top6A and two Top6B chains. Mg(2+) serves as cofactor.

It carries out the reaction ATP-dependent breakage, passage and rejoining of double-stranded DNA.. Relaxes both positive and negative superturns and exhibits a strong decatenase activity. The polypeptide is Type 2 DNA topoisomerase 6 subunit A (Methanosarcina mazei (strain ATCC BAA-159 / DSM 3647 / Goe1 / Go1 / JCM 11833 / OCM 88) (Methanosarcina frisia)).